A 262-amino-acid polypeptide reads, in one-letter code: Virulence plasmid protein pGP6-D-related protein (262 aa).

This sequence belongs to the UPF0137 (pGP6-D) family.

The polypeptide is Virulence plasmid protein pGP6-D-related protein (Chlamydia muridarum (strain MoPn / Nigg)).